Consider the following 790-residue polypeptide: Kinesin-like protein KIN-14D (790 aa).

Disordered regions lie at residues 1–56 and 116–139; these read MPLR…DVGS and DKENLSSSLQSAEKRYSDKELDAK. The segment at 1 to 66 is globular; the sequence is MPLRNQNRAP…TEECGKVEFT (66 aa). Over residues 16-33 the composition is skewed to basic and acidic residues; sequence VKKEALSSIPFDKRRKET. Residues 34 to 55 are compositionally biased toward polar residues; sequence QGTGRRQVLSTVNRQDANSDVG. Coiled coils occupy residues 117 to 316 and 347 to 426; these read KENL…HVVQ and SLEE…LELK. Basic and acidic residues predominate over residues 127-139; that stretch reads AEKRYSDKELDAK. In terms of domain architecture, Kinesin motor spans 428-769; that stretch reads NIRVFCRVRP…LRFAARVNAC (342 aa). An ATP-binding site is contributed by 513 to 520; that stretch reads GQTGSGKT.

It belongs to the TRAFAC class myosin-kinesin ATPase superfamily. Kinesin family. KIN-14 subfamily. Slightly expressed in anther lobes with pollen mother cells at anther stage 5. Strongly expressed at anther stage 6 in the tapetum and meiotic cells. Also detected in the gynoecium and the ovule.

The protein localises to the cytoplasm. It is found in the cytoskeleton. The protein resides in the phragmoplast. Kinesin that supports microtubule movement in an ATP-dependent manner and that functions as a minus-end directed motor as well as a plus-end tracking protein. During mitosis, is involved in early spindle assembly. Participates in the capture of antiparallel interpolar microtubules and helps in generating force to coalign microtubules. The chain is Kinesin-like protein KIN-14D from Arabidopsis thaliana (Mouse-ear cress).